We begin with the raw amino-acid sequence, 119 residues long: Large ribosomal subunit protein bL19 (119 aa).

It belongs to the bacterial ribosomal protein bL19 family.

Functionally, this protein is located at the 30S-50S ribosomal subunit interface and may play a role in the structure and function of the aminoacyl-tRNA binding site. This Idiomarina loihiensis (strain ATCC BAA-735 / DSM 15497 / L2-TR) protein is Large ribosomal subunit protein bL19.